A 533-amino-acid chain; its full sequence is Calcineurin-interacting protein 3 (533 aa).

Disordered regions lie at residues 1-30 (MRSL…NMDI), 53-85 (PRKQ…YTKR), and 359-404 (MDMS…LTLP). The segment covering 61–85 (KRAEPVSEEHRKKESSKNSREYTKR) has biased composition (basic and acidic residues). The segment covering 359-372 (MDMSQTLSPEQTLS) has biased composition (polar residues). Residues 373–384 (PREKLQVQDRKI) are compositionally biased toward basic and acidic residues.

It is found in the nucleus. The chain is Calcineurin-interacting protein 3 from Caenorhabditis elegans.